The following is a 508-amino-acid chain: Glycerol kinase (508 aa).

An ADP-binding site is contributed by T14. ATP contacts are provided by T14, T15, and S16. Residue T14 coordinates sn-glycerol 3-phosphate. R18 lines the ADP pocket. Sn-glycerol 3-phosphate is bound by residues R84, E85, and Y136. Glycerol is bound by residues R84, E85, and Y136. H232 carries the post-translational modification Phosphohistidine; by HPr. Position 246 (D246) interacts with sn-glycerol 3-phosphate. 2 residues coordinate glycerol: D246 and Q247. ADP-binding residues include T268 and G311. ATP is bound by residues T268, G311, Q315, and G412. ADP is bound by residues G412 and N416.

Belongs to the FGGY kinase family. Homotetramer and homodimer (in equilibrium). In terms of processing, the phosphoenolpyruvate-dependent sugar phosphotransferase system (PTS), including enzyme I, and histidine-containing protein (HPr) are required for the phosphorylation, which leads to the activation of the enzyme.

The catalysed reaction is glycerol + ATP = sn-glycerol 3-phosphate + ADP + H(+). It participates in polyol metabolism; glycerol degradation via glycerol kinase pathway; sn-glycerol 3-phosphate from glycerol: step 1/1. Its activity is regulated as follows. Activated by phosphorylation and inhibited by fructose 1,6-bisphosphate (FBP). In terms of biological role, key enzyme in the regulation of glycerol uptake and metabolism. Catalyzes the phosphorylation of glycerol to yield sn-glycerol 3-phosphate. The sequence is that of Glycerol kinase from Streptococcus pyogenes serotype M18 (strain MGAS8232).